We begin with the raw amino-acid sequence, 473 residues long: Histidinol dehydrogenase, chloroplastic (473 aa).

A disordered region spans residues 1–28; that stretch reads MSLRPGRAHPLAASPLHTPLPARPRPQL. NAD(+) contacts are provided by tyrosine 162, glutamine 224, and asparagine 247. Substrate contacts are provided by serine 273, glutamine 295, and histidine 298. Residues glutamine 295 and histidine 298 each coordinate Zn(2+). Catalysis depends on proton acceptor residues glutamate 363 and histidine 364. Residues histidine 364, aspartate 397, glutamate 451, and histidine 456 each contribute to the substrate site. Residue aspartate 397 participates in Zn(2+) binding. Histidine 456 lines the Zn(2+) pocket.

It belongs to the histidinol dehydrogenase family. Requires Zn(2+) as cofactor.

It is found in the plastid. The protein resides in the chloroplast. The enzyme catalyses L-histidinol + 2 NAD(+) + H2O = L-histidine + 2 NADH + 3 H(+). The protein operates within amino-acid biosynthesis; L-histidine biosynthesis; L-histidine from 5-phospho-alpha-D-ribose 1-diphosphate: step 9/9. Functionally, catalyzes the sequential NAD-dependent oxidations of L-histidinol to L-histidinaldehyde and then to L-histidine. This chain is Histidinol dehydrogenase, chloroplastic (HDH), found in Oryza sativa subsp. japonica (Rice).